The sequence spans 116 residues: Hydrogenase maturation factor HypA (116 aa).

Histidine 2 is a binding site for Ni(2+). Residues cysteine 73, cysteine 76, cysteine 89, and cysteine 92 each contribute to the Zn(2+) site.

This sequence belongs to the HypA/HybF family.

In terms of biological role, involved in the maturation of [NiFe] hydrogenases. Required for nickel insertion into the metal center of the hydrogenase. This is Hydrogenase maturation factor HypA from Chlorobium limicola (strain DSM 245 / NBRC 103803 / 6330).